The primary structure comprises 480 residues: Oxysterol-binding protein-related protein 2 (480 aa).

Residues 1 to 60 (MNGEEEFFDAVTGFDSDNSSGEFSEANQKVTGMIDLDTSKNNRIGKTGERPSQENGIQKH) form a disordered region. Residues 15–30 (DSDNSSGEFSEANQKV) are compositionally biased toward polar residues. Ser19 and Ser20 each carry phosphoserine. Residues Lys90, 178 to 179 (HH), and 427 to 431 (EEKQR) each bind a 1,2-diacyl-sn-glycero-3-phospho-(1D-myo-inositol-4,5-bisphosphate).

The protein belongs to the OSBP family. As to quaternary structure, monomer. Homotetramer; phosphatidylinositol-4,5-bisphosphate binding promotes formation of stable tetramers. Interacts with DIAPH1. In terms of tissue distribution, widely expressed.

Its subcellular location is the cytoplasm. It localises to the cytosol. The protein resides in the lipid droplet. It is found in the cell membrane. Its function is as follows. Intracellular transport protein that binds sterols and phospholipids and mediates lipid transport between intracellular compartments. Increases plasma membrane cholesterol levels and decreases phosphatidylinositol-4,5-bisphosphate levels in the cell membrane. Binds phosphoinositides, such as phosphatidylinositol-4,5-bisphosphate. Exhibits strong binding to phosphatidic acid and weak binding to phosphatidylinositol 3-phosphate. Binds cholesterol, dehydroergosterol, 22(R)-hydroxycholesterol and 25-hydroxycholesterol (in vitro). The polypeptide is Oxysterol-binding protein-related protein 2 (OSBPL2) (Homo sapiens (Human)).